The chain runs to 1086 residues: Isoleucine--tRNA ligase (1086 aa).

The 'HIGH' region signature appears at 53 to 63; that stretch reads PFANGLPHYGH. A 'KMSKS' region motif is present at residues 624-628; the sequence is KLSKR. Lys-627 provides a ligand contact to ATP.

Belongs to the class-I aminoacyl-tRNA synthetase family. IleS type 2 subfamily. Monomer. Zn(2+) is required as a cofactor.

Its subcellular location is the cytoplasm. It catalyses the reaction tRNA(Ile) + L-isoleucine + ATP = L-isoleucyl-tRNA(Ile) + AMP + diphosphate. In terms of biological role, catalyzes the attachment of isoleucine to tRNA(Ile). As IleRS can inadvertently accommodate and process structurally similar amino acids such as valine, to avoid such errors it has two additional distinct tRNA(Ile)-dependent editing activities. One activity is designated as 'pretransfer' editing and involves the hydrolysis of activated Val-AMP. The other activity is designated 'posttransfer' editing and involves deacylation of mischarged Val-tRNA(Ile). The polypeptide is Isoleucine--tRNA ligase (Rickettsia prowazekii (strain Madrid E)).